The chain runs to 225 residues: NAD(P)H-quinone oxidoreductase subunit K, chloroplastic (225 aa).

Residues cysteine 43, cysteine 44, cysteine 108, and cysteine 139 each coordinate [4Fe-4S] cluster.

Belongs to the complex I 20 kDa subunit family. As to quaternary structure, NDH is composed of at least 16 different subunits, 5 of which are encoded in the nucleus. It depends on [4Fe-4S] cluster as a cofactor.

The protein resides in the plastid. Its subcellular location is the chloroplast thylakoid membrane. The enzyme catalyses a plastoquinone + NADH + (n+1) H(+)(in) = a plastoquinol + NAD(+) + n H(+)(out). It carries out the reaction a plastoquinone + NADPH + (n+1) H(+)(in) = a plastoquinol + NADP(+) + n H(+)(out). NDH shuttles electrons from NAD(P)H:plastoquinone, via FMN and iron-sulfur (Fe-S) centers, to quinones in the photosynthetic chain and possibly in a chloroplast respiratory chain. The immediate electron acceptor for the enzyme in this species is believed to be plastoquinone. Couples the redox reaction to proton translocation, and thus conserves the redox energy in a proton gradient. The polypeptide is NAD(P)H-quinone oxidoreductase subunit K, chloroplastic (Capsella bursa-pastoris (Shepherd's purse)).